The chain runs to 514 residues: 2-isopropylmalate synthase (514 aa).

Positions 5–268 constitute a Pyruvate carboxyltransferase domain; that stretch reads LIIFDTTLRD…DVGLDTTQIV (264 aa). 4 residues coordinate Mn(2+): aspartate 14, histidine 202, histidine 204, and asparagine 239. The segment at 395-514 is regulatory domain; sequence KFVSLSQRSE…KDDKLNPQRS (120 aa).

This sequence belongs to the alpha-IPM synthase/homocitrate synthase family. LeuA type 1 subfamily. In terms of assembly, homodimer. The cofactor is Mn(2+).

It localises to the cytoplasm. It catalyses the reaction 3-methyl-2-oxobutanoate + acetyl-CoA + H2O = (2S)-2-isopropylmalate + CoA + H(+). It functions in the pathway amino-acid biosynthesis; L-leucine biosynthesis; L-leucine from 3-methyl-2-oxobutanoate: step 1/4. In terms of biological role, catalyzes the condensation of the acetyl group of acetyl-CoA with 3-methyl-2-oxobutanoate (2-ketoisovalerate) to form 3-carboxy-3-hydroxy-4-methylpentanoate (2-isopropylmalate). This Burkholderia ambifaria (strain MC40-6) protein is 2-isopropylmalate synthase.